A 131-amino-acid polypeptide reads, in one-letter code: Glycine cleavage system H protein (131 aa).

In terms of domain architecture, Lipoyl-binding spans 24-106 (TVRIGITDYA…YGEGWLVDLE (83 aa)). An N6-lipoyllysine modification is found at lysine 65.

Belongs to the GcvH family. In terms of assembly, the glycine cleavage system is composed of four proteins: P, T, L and H. It depends on (R)-lipoate as a cofactor.

The glycine cleavage system catalyzes the degradation of glycine. The H protein shuttles the methylamine group of glycine from the P protein to the T protein. The sequence is that of Glycine cleavage system H protein from Mycobacteroides abscessus (strain ATCC 19977 / DSM 44196 / CCUG 20993 / CIP 104536 / JCM 13569 / NCTC 13031 / TMC 1543 / L948) (Mycobacterium abscessus).